The chain runs to 498 residues: ATP synthase subunit beta, chloroplastic (498 aa).

172–179 (GGAGVGKT) is an ATP binding site.

Belongs to the ATPase alpha/beta chains family. F-type ATPases have 2 components, CF(1) - the catalytic core - and CF(0) - the membrane proton channel. CF(1) has five subunits: alpha(3), beta(3), gamma(1), delta(1), epsilon(1). CF(0) has four main subunits: a(1), b(1), b'(1) and c(9-12).

The protein localises to the plastid. It localises to the chloroplast thylakoid membrane. It carries out the reaction ATP + H2O + 4 H(+)(in) = ADP + phosphate + 5 H(+)(out). Its function is as follows. Produces ATP from ADP in the presence of a proton gradient across the membrane. The catalytic sites are hosted primarily by the beta subunits. This chain is ATP synthase subunit beta, chloroplastic, found in Populus trichocarpa (Western balsam poplar).